A 181-amino-acid chain; its full sequence is Large ribosomal subunit protein uL5c (181 aa).

This sequence belongs to the universal ribosomal protein uL5 family. As to quaternary structure, part of the 50S ribosomal subunit; contacts the 5S rRNA.

It is found in the plastid. The protein resides in the chloroplast. Its function is as follows. Binds 5S rRNA, forms part of the central protuberance of the 50S subunit. The polypeptide is Large ribosomal subunit protein uL5c (rpl5) (Porphyra purpurea (Red seaweed)).